Reading from the N-terminus, the 341-residue chain is 4-hydroxy-2-oxovalerate aldolase 3 (341 aa).

Positions 5-257 constitute a Pyruvate carboxyltransferase domain; that stretch reads ITLHDMTLRD…ETGVDVYRIA (253 aa). 13-14 serves as a coordination point for substrate; the sequence is RD. Asp-14 lines the Mn(2+) pocket. Catalysis depends on His-17, which acts as the Proton acceptor. Ser-167 and His-196 together coordinate substrate. Mn(2+)-binding residues include His-196 and His-198. A substrate-binding site is contributed by Tyr-287.

Belongs to the 4-hydroxy-2-oxovalerate aldolase family.

It carries out the reaction (S)-4-hydroxy-2-oxopentanoate = acetaldehyde + pyruvate. This chain is 4-hydroxy-2-oxovalerate aldolase 3 (bpHI), found in Cupriavidus necator (strain ATCC 17699 / DSM 428 / KCTC 22496 / NCIMB 10442 / H16 / Stanier 337) (Ralstonia eutropha).